The sequence spans 129 residues: Ribosome-binding factor A (129 aa).

The protein belongs to the RbfA family. Monomer. Binds 30S ribosomal subunits, but not 50S ribosomal subunits or 70S ribosomes.

The protein resides in the cytoplasm. Its function is as follows. One of several proteins that assist in the late maturation steps of the functional core of the 30S ribosomal subunit. Associates with free 30S ribosomal subunits (but not with 30S subunits that are part of 70S ribosomes or polysomes). Required for efficient processing of 16S rRNA. May interact with the 5'-terminal helix region of 16S rRNA. This chain is Ribosome-binding factor A, found in Thioalkalivibrio sulfidiphilus (strain HL-EbGR7).